Here is a 318-residue protein sequence, read N- to C-terminus: Methionyl-tRNA formyltransferase (318 aa).

(6S)-5,6,7,8-tetrahydrofolate is bound at residue 110–113; sequence SLLP.

Belongs to the Fmt family.

It catalyses the reaction L-methionyl-tRNA(fMet) + (6R)-10-formyltetrahydrofolate = N-formyl-L-methionyl-tRNA(fMet) + (6S)-5,6,7,8-tetrahydrofolate + H(+). Attaches a formyl group to the free amino group of methionyl-tRNA(fMet). The formyl group appears to play a dual role in the initiator identity of N-formylmethionyl-tRNA by promoting its recognition by IF2 and preventing the misappropriation of this tRNA by the elongation apparatus. The sequence is that of Methionyl-tRNA formyltransferase from Lacticaseibacillus casei (strain BL23) (Lactobacillus casei).